The chain runs to 217 residues: Large ribosomal subunit protein uL1 (217 aa).

It belongs to the universal ribosomal protein uL1 family.

In Spodoptera frugiperda (Fall armyworm), this protein is Large ribosomal subunit protein uL1 (RpL10A).